Consider the following 432-residue polypeptide: Putative D-alanyl-D-alanine carboxypeptidase (432 aa).

A helical; Signal-anchor membrane pass occupies residues 7-25 (ATVLLTFSLSAFAVEYPVL).

The protein belongs to the peptidase S12 family. YfeW subfamily.

Its subcellular location is the cell inner membrane. It carries out the reaction Preferential cleavage: (Ac)2-L-Lys-D-Ala-|-D-Ala. Also transpeptidation of peptidyl-alanyl moieties that are N-acyl substituents of D-alanine.. This is Putative D-alanyl-D-alanine carboxypeptidase from Salmonella choleraesuis (strain SC-B67).